The chain runs to 926 residues: Isoleucine--tRNA ligase (926 aa).

Residues 1–21 form a disordered region; it reads MKMKETLQLGKTAFPMRGNLP. The 'HIGH' region motif lies at 57–67; it reads PYANGNIHLGH. E552 is a binding site for L-isoleucyl-5'-AMP. The 'KMSKS' region motif lies at 593-597; the sequence is KMSKS. An ATP-binding site is contributed by K596. Positions 886, 889, 906, and 909 each coordinate Zn(2+).

Belongs to the class-I aminoacyl-tRNA synthetase family. IleS type 1 subfamily. As to quaternary structure, monomer. The cofactor is Zn(2+).

The protein localises to the cytoplasm. It catalyses the reaction tRNA(Ile) + L-isoleucine + ATP = L-isoleucyl-tRNA(Ile) + AMP + diphosphate. Its function is as follows. Catalyzes the attachment of isoleucine to tRNA(Ile). As IleRS can inadvertently accommodate and process structurally similar amino acids such as valine, to avoid such errors it has two additional distinct tRNA(Ile)-dependent editing activities. One activity is designated as 'pretransfer' editing and involves the hydrolysis of activated Val-AMP. The other activity is designated 'posttransfer' editing and involves deacylation of mischarged Val-tRNA(Ile). The protein is Isoleucine--tRNA ligase of Enterococcus faecalis (strain ATCC 700802 / V583).